The chain runs to 1463 residues: Nucleoporin NUP152 (1463 aa).

Disordered stretches follow at residues methionine 1–glycine 199, glycine 339–alanine 568, and threonine 609–threonine 1064. Polar residues-rich tracts occupy residues serine 32–alanine 42, glycine 81–alanine 92, threonine 144–proline 155, threonine 175–proline 191, proline 367–proline 378, and proline 416–isoleucine 472. A compositionally biased stretch (acidic residues) spans lysine 481–glutamate 498. 2 stretches are compositionally biased toward low complexity: residues glycine 511–serine 523 and alanine 616–threonine 630. Polar residues-rich tracts occupy residues isoleucine 651–proline 664, proline 673–alanine 689, and threonine 720–glutamine 746. Residues phenylalanine 729 to glycine 732 form an FXFG 1 repeat. A compositionally biased stretch (low complexity) spans lysine 753–serine 768. Polar residues predominate over residues proline 777 to threonine 789. The segment covering threonine 803 to threonine 813 has biased composition (low complexity). Polar residues predominate over residues asparagine 814–aspartate 828. The FXFG 2 repeat unit spans residues phenylalanine 835–glycine 838. The span at threonine 840–asparagine 863 shows a compositional bias: polar residues. Over residues alanine 870 to threonine 881 the composition is skewed to low complexity. 5 stretches are compositionally biased toward polar residues: residues glycine 900–glutamine 923, glycine 940–glutamate 961, serine 968–glutamate 987, serine 998–glutamine 1029, and proline 1037–asparagine 1055. The FXFG 3 repeat unit spans residues phenylalanine 910–glycine 913. FXFG repeat units lie at residues phenylalanine 1074 to glycine 1077, phenylalanine 1127 to glycine 1130, phenylalanine 1141 to glycine 1144, and phenylalanine 1152 to glycine 1155. 2 disordered regions span residues glycine 1155–serine 1174 and glutamine 1179–proline 1217. Over residues alanine 1156 to alanine 1170 the composition is skewed to low complexity. The stretch at phenylalanine 1173–glycine 1176 is one FXFG 8 repeat. Residues glutamine 1179–alanine 1199 show a composition bias toward polar residues. An FXFG 9 repeat occupies phenylalanine 1236–glycine 1239. Positions glycine 1240–alanine 1271 are enriched in low complexity. Disordered regions lie at residues glycine 1240–valine 1335 and alanine 1416–lysine 1463. The RanBD1 domain maps to glycine 1289–lysine 1427. The segment covering leucine 1418 to lysine 1463 has biased composition (basic and acidic residues).

The nuclear pore complex (NPC) constitutes the exclusive means of nucleocytoplasmic transport. NPCs allow the passive diffusion of ions and small molecules and the active, nuclear transport receptor-mediated bidirectional transport of macromolecules such as proteins, RNAs, ribonucleoparticles (RNPs), and ribosomal subunits across the nuclear envelope. The 55-60 MDa NPC is composed of at least 28 different subunits: AMO1, ELYS, GLE1, GLE2, MLP1, NDC1, NIC96, NSP1, NUP133, NUP145, NUP152, NUP159, NUP170, NUP188, NUP192, NUP37, NUP49, NUP53, NUP56, NUP57, NUP82, NUP84, NUP85, POM152, POM33, POM34, SEC13 and SEH1. Due to its 8-fold rotational symmetry, all subunits are present with 8 copies or multiples thereof.

It localises to the nucleus. The protein resides in the nuclear pore complex. It is found in the nucleus membrane. In terms of biological role, functions as a component of the nuclear pore complex (NPC). NPC components, collectively referred to as nucleoporins (NUPs), can play the role of both NPC structural components and of docking or interaction partners for transiently associated nuclear transport factors. Active directional transport is assured by both, a Phe-Gly (FG) repeat affinity gradient for these transport factors across the NPC and a transport cofactor concentration gradient across the nuclear envelope (GSP1 and GSP2 GTPases associated predominantly with GTP in the nucleus, with GDP in the cytoplasm). This chain is Nucleoporin NUP152 (NUP152), found in Chaetomium thermophilum (strain DSM 1495 / CBS 144.50 / IMI 039719) (Thermochaetoides thermophila).